A 396-amino-acid chain; its full sequence is Protein-export membrane protein SecD (396 aa).

The next 6 helical transmembrane spans lie at 12–32 (ILILIIFVTLSVFLIVFKGLD), 243–263 (LKGTAIALLLAFIAVGIIVSI), 272–292 (IPILITCISEVIIILGFASLI), 298–318 (LPSIAGIIAAVGTGVDNQIVI), 338–358 (FFIIFASAATSIAAMLPLFVL), and 360–380 (VGMLKGFAITTIAGVLIGIFI).

It belongs to the SecD/SecF family. SecD subfamily. In terms of assembly, part of the protein translocation apparatus. Forms a complex with SecF.

The protein resides in the cell membrane. Its function is as follows. Involved in protein export. The chain is Protein-export membrane protein SecD from Methanocaldococcus jannaschii (strain ATCC 43067 / DSM 2661 / JAL-1 / JCM 10045 / NBRC 100440) (Methanococcus jannaschii).